We begin with the raw amino-acid sequence, 310 residues long: Ribosomal protein uL3 glutamine methyltransferase (310 aa).

It belongs to the protein N5-glutamine methyltransferase family. PrmB subfamily.

It carries out the reaction L-glutaminyl-[ribosomal protein uL3] + S-adenosyl-L-methionine = N(5)-methyl-L-glutaminyl-[ribosomal protein uL3] + S-adenosyl-L-homocysteine + H(+). Its function is as follows. Methylates large ribosomal subunit protein uL3 on a specific glutamine residue. This is Ribosomal protein uL3 glutamine methyltransferase from Vibrio anguillarum (strain ATCC 68554 / 775) (Listonella anguillarum).